The sequence spans 304 residues: Protease HtpX homolog (304 aa).

2 helical membrane passes run 14–34 and 39–59; these read IFII…IGII and YLNG…IMVM. His144 provides a ligand contact to Zn(2+). Residue Glu145 is part of the active site. His148 lines the Zn(2+) pocket. Helical transmembrane passes span 159–179 and 202–222; these read IAIA…RMIF and AIIY…ATAI. Residue Glu231 participates in Zn(2+) binding.

Belongs to the peptidase M48B family. Zn(2+) serves as cofactor.

The protein resides in the cell membrane. This is Protease HtpX homolog from Listeria monocytogenes serovar 1/2a (strain ATCC BAA-679 / EGD-e).